A 144-amino-acid polypeptide reads, in one-letter code: Large ribosomal subunit protein uL15 (144 aa).

The interval 1–53 (MRLNTLSPAVGAKSAPKRVGRGIGSGLGKTAGRGHKGQKSRSGGGVRPGFEGG) is disordered. Gly residues-rich tracts occupy residues 21-31 (RGIGSGLGKTA) and 42-52 (SGGGVRPGFEG).

This sequence belongs to the universal ribosomal protein uL15 family. Part of the 50S ribosomal subunit.

In terms of biological role, binds to the 23S rRNA. The protein is Large ribosomal subunit protein uL15 of Shewanella amazonensis (strain ATCC BAA-1098 / SB2B).